Consider the following 422-residue polypeptide: L-cysteine:1D-myo-inositol 2-amino-2-deoxy-alpha-D-glucopyranoside ligase (422 aa).

A Zn(2+)-binding site is contributed by C43. Residues 43–46 (CGIT), T58, and 81–83 (NVT) contribute to the L-cysteinyl-5'-AMP site. A 'HIGH' region motif is present at residues 45 to 55 (ITPYDATHLGH). Residues 185–200 (AERGGDPDRPGKRNRL) show a composition bias toward basic and acidic residues. The segment at 185–221 (AERGGDPDRPGKRNRLDPMLWRGRRPGEPSWPGPRGV) is disordered. A 'ERGGDP' region motif is present at residues 186–191 (ERGGDP). Residue W227 participates in L-cysteinyl-5'-AMP binding. C231 is a binding site for Zn(2+). An L-cysteinyl-5'-AMP-binding site is contributed by 249–251 (GSD). A Zn(2+)-binding site is contributed by H256. I288 contributes to the L-cysteinyl-5'-AMP binding site. The short motif at 294–298 (KMSKS) is the 'KMSKS' region element.

It belongs to the class-I aminoacyl-tRNA synthetase family. MshC subfamily. As to quaternary structure, monomer. The cofactor is Zn(2+).

It carries out the reaction 1D-myo-inositol 2-amino-2-deoxy-alpha-D-glucopyranoside + L-cysteine + ATP = 1D-myo-inositol 2-(L-cysteinylamino)-2-deoxy-alpha-D-glucopyranoside + AMP + diphosphate + H(+). Functionally, catalyzes the ATP-dependent condensation of GlcN-Ins and L-cysteine to form L-Cys-GlcN-Ins. This Geodermatophilus obscurus (strain ATCC 25078 / DSM 43160 / JCM 3152 / CCUG 61914 / KCC A-0152 / KCTC 9177 / NBRC 13315 / NRRL B-3577 / G-20) protein is L-cysteine:1D-myo-inositol 2-amino-2-deoxy-alpha-D-glucopyranoside ligase.